The following is a 197-amino-acid chain: Cell division protein SepF (197 aa).

Disordered regions lie at residues 38–72 (MPTPLPEESAPAPRRLPENPTVASNFAMNSNTTPT) and 164–197 (LSREETPATPAAPARPAAPAPAWSDEMTPMAQAQ). Residues 58–72 (TVASNFAMNSNTTPT) show a composition bias toward polar residues. The span at 170 to 185 (PATPAAPARPAAPAPA) shows a compositional bias: low complexity.

This sequence belongs to the SepF family. Homodimer. Interacts with FtsZ.

It localises to the cytoplasm. In terms of biological role, cell division protein that is part of the divisome complex and is recruited early to the Z-ring. Probably stimulates Z-ring formation, perhaps through the cross-linking of FtsZ protofilaments. Its function overlaps with FtsA. This is Cell division protein SepF from Picosynechococcus sp. (strain ATCC 27264 / PCC 7002 / PR-6) (Agmenellum quadruplicatum).